The primary structure comprises 381 residues: E3 ubiquitin-protein ligase KCMF1 (381 aa).

Residues 4 to 60 (HEGVSCDACLKGNFRGRRYKCLICYDYDLCASCYESGATTTRHTTDHPMQCILTRVD) form a ZZ-type zinc finger. Zn(2+) contacts are provided by cysteine 9, cysteine 12, cysteine 24, cysteine 27, cysteine 33, cysteine 36, histidine 46, and histidine 50. A C2H2-type zinc finger spans residues 78-101 (FTCPYCGKMGYTETSLQEHVTSEH). Disordered regions lie at residues 154–193 (MFHP…PSNR) and 241–286 (AQAA…QQSI). Positions 175 to 191 (SSSTGGLSSSQSSYSPS) are enriched in low complexity. A coiled-coil region spans residues 223 to 261 (SASQLQQLQMQLQLERQQAQAARQQLETARNATRRNNAS).

It belongs to the KCMF1 family. Component of the SIFI complex, composed of kcmf1, ubr4 and calmodulin.

Its subcellular location is the cytoplasm. The protein localises to the late endosome. The protein resides in the lysosome. The enzyme catalyses S-ubiquitinyl-[E2 ubiquitin-conjugating enzyme]-L-cysteine + [acceptor protein]-L-lysine = [E2 ubiquitin-conjugating enzyme]-L-cysteine + N(6)-ubiquitinyl-[acceptor protein]-L-lysine.. Its pathway is protein modification; protein ubiquitination. Functionally, E3 ubiquitin-protein ligase which accepts ubiquitin from an E2 ubiquitin-conjugating enzyme and then transfers it to targeted substrates, promoting their degradation by the proteasome. Together with UBR4, component of the N-end rule pathway: ubiquitinates proteins bearing specific N-terminal residues that are destabilizing according to the N-end rule, leading to their degradation. Does not ubiquitinate proteins that are acetylated at the N-terminus. Together with ubr4, part of a protein quality control pathway that catalyzes ubiquitination and degradation of proteins that have been oxidized in response to reactive oxygen species (ROS): recognizes proteins with an Arg-CysO3(H) degron at the N-terminus, and mediates assembly of heterotypic 'Lys-63'-/'Lys-27'-linked branched ubiquitin chains on oxidized proteins, leading to their degradation by autophagy. Catalytic component of the SIFI complex, a multiprotein complex required to inhibit the mitochondrial stress response after a specific stress event has been resolved: ubiquitinates and degrades (1) components of the HRI-mediated signaling of the integrated stress response, such as dele1 and eif2ak1/hri, as well as (2) unimported mitochondrial precursors. Within the SIFI complex, ubr4 initiates ubiquitin chain that are further elongated or branched by kcmf1. In Xenopus laevis (African clawed frog), this protein is E3 ubiquitin-protein ligase KCMF1 (kcmf1).